A 585-amino-acid chain; its full sequence is BURP domain-containing protein 17 (585 aa).

The signal sequence occupies residues 1–20 (MDRIFARFFCFLLIAAVSHA). A disordered region spans residues 63 to 82 (GQRNYKSSVSHVAERSHRVD). Residues 363–584 (FFLEKNLQQG…QPDAVVWTRR (222 aa)) form the BURP domain.

Expressed in leaves.

The chain is BURP domain-containing protein 17 (BURP17) from Oryza sativa subsp. japonica (Rice).